The chain runs to 302 residues: Glutaminase (302 aa).

Substrate-binding residues include serine 61, asparagine 111, glutamate 155, asparagine 162, tyrosine 186, tyrosine 238, and valine 256.

This sequence belongs to the glutaminase family. As to quaternary structure, homotetramer.

It carries out the reaction L-glutamine + H2O = L-glutamate + NH4(+). In Pseudomonas fluorescens (strain SBW25), this protein is Glutaminase.